The sequence spans 252 residues: tRNA (guanine-N(1)-)-methyltransferase (252 aa).

S-adenosyl-L-methionine-binding positions include Gly-117 and 137–142 (IGDYVL).

The protein belongs to the RNA methyltransferase TrmD family. Homodimer.

It is found in the cytoplasm. It catalyses the reaction guanosine(37) in tRNA + S-adenosyl-L-methionine = N(1)-methylguanosine(37) in tRNA + S-adenosyl-L-homocysteine + H(+). Functionally, specifically methylates guanosine-37 in various tRNAs. In Idiomarina loihiensis (strain ATCC BAA-735 / DSM 15497 / L2-TR), this protein is tRNA (guanine-N(1)-)-methyltransferase.